Reading from the N-terminus, the 500-residue chain is Glutamate--tRNA ligase (500 aa).

The 'HIGH' region signature appears at 12–22 (PSPTGHLHIGN). The 'KMSKS' region motif lies at 259 to 263 (KLSKR). K262 lines the ATP pocket.

It belongs to the class-I aminoacyl-tRNA synthetase family. Glutamate--tRNA ligase type 1 subfamily. In terms of assembly, monomer.

The protein localises to the cytoplasm. The catalysed reaction is tRNA(Glu) + L-glutamate + ATP = L-glutamyl-tRNA(Glu) + AMP + diphosphate. In terms of biological role, catalyzes the attachment of glutamate to tRNA(Glu) in a two-step reaction: glutamate is first activated by ATP to form Glu-AMP and then transferred to the acceptor end of tRNA(Glu). The protein is Glutamate--tRNA ligase of Lactobacillus delbrueckii subsp. bulgaricus (strain ATCC 11842 / DSM 20081 / BCRC 10696 / JCM 1002 / NBRC 13953 / NCIMB 11778 / NCTC 12712 / WDCM 00102 / Lb 14).